A 356-amino-acid chain; its full sequence is UDP-N-acetylglucosamine--N-acetylmuramyl-(pentapeptide) pyrophosphoryl-undecaprenol N-acetylglucosamine transferase (356 aa).

UDP-N-acetyl-alpha-D-glucosamine-binding residues include Ser195 and Gln287.

The protein belongs to the glycosyltransferase 28 family. MurG subfamily.

The protein localises to the cell membrane. The catalysed reaction is Mur2Ac(oyl-L-Ala-gamma-D-Glu-L-Lys-D-Ala-D-Ala)-di-trans,octa-cis-undecaprenyl diphosphate + UDP-N-acetyl-alpha-D-glucosamine = beta-D-GlcNAc-(1-&gt;4)-Mur2Ac(oyl-L-Ala-gamma-D-Glu-L-Lys-D-Ala-D-Ala)-di-trans,octa-cis-undecaprenyl diphosphate + UDP + H(+). It functions in the pathway cell wall biogenesis; peptidoglycan biosynthesis. Functionally, cell wall formation. Catalyzes the transfer of a GlcNAc subunit on undecaprenyl-pyrophosphoryl-MurNAc-pentapeptide (lipid intermediate I) to form undecaprenyl-pyrophosphoryl-MurNAc-(pentapeptide)GlcNAc (lipid intermediate II). This is UDP-N-acetylglucosamine--N-acetylmuramyl-(pentapeptide) pyrophosphoryl-undecaprenol N-acetylglucosamine transferase from Streptococcus gordonii (strain Challis / ATCC 35105 / BCRC 15272 / CH1 / DL1 / V288).